A 475-amino-acid chain; its full sequence is ATP synthase subunit beta (475 aa).

Position 152–159 (152–159 (GGAGVGKT)) interacts with ATP.

Belongs to the ATPase alpha/beta chains family. In terms of assembly, F-type ATPases have 2 components, CF(1) - the catalytic core - and CF(0) - the membrane proton channel. CF(1) has five subunits: alpha(3), beta(3), gamma(1), delta(1), epsilon(1). CF(0) has four main subunits: a(1), b(1), b'(1) and c(9-12).

The protein resides in the cell inner membrane. It catalyses the reaction ATP + H2O + 4 H(+)(in) = ADP + phosphate + 5 H(+)(out). Its function is as follows. Produces ATP from ADP in the presence of a proton gradient across the membrane. The catalytic sites are hosted primarily by the beta subunits. This is ATP synthase subunit beta from Cereibacter sphaeroides (strain ATCC 17025 / ATH 2.4.3) (Rhodobacter sphaeroides).